A 682-amino-acid polypeptide reads, in one-letter code: UvrABC system protein B (682 aa).

One can recognise a Helicase ATP-binding domain in the interval aspartate 27–isoleucine 414. Position 40-47 (glycine 40–threonine 47) interacts with ATP. A Beta-hairpin motif is present at residues tyrosine 93–isoleucine 116. One can recognise a Helicase C-terminal domain in the interval glutamine 432–leucine 594. Residues alanine 609–alanine 628 form a disordered region. The region spanning glycine 642 to arginine 677 is the UVR domain.

The protein belongs to the UvrB family. Forms a heterotetramer with UvrA during the search for lesions. Interacts with UvrC in an incision complex.

The protein resides in the cytoplasm. The UvrABC repair system catalyzes the recognition and processing of DNA lesions. A damage recognition complex composed of 2 UvrA and 2 UvrB subunits scans DNA for abnormalities. Upon binding of the UvrA(2)B(2) complex to a putative damaged site, the DNA wraps around one UvrB monomer. DNA wrap is dependent on ATP binding by UvrB and probably causes local melting of the DNA helix, facilitating insertion of UvrB beta-hairpin between the DNA strands. Then UvrB probes one DNA strand for the presence of a lesion. If a lesion is found the UvrA subunits dissociate and the UvrB-DNA preincision complex is formed. This complex is subsequently bound by UvrC and the second UvrB is released. If no lesion is found, the DNA wraps around the other UvrB subunit that will check the other stand for damage. This is UvrABC system protein B from Oleidesulfovibrio alaskensis (strain ATCC BAA-1058 / DSM 17464 / G20) (Desulfovibrio alaskensis).